We begin with the raw amino-acid sequence, 435 residues long: Estrogen-related receptor gamma (435 aa).

The tract at residues 1 to 64 (MSNKDRHIDS…GLDSPPLYPS (64 aa)) is disordered. The segment covering 10–29 (SSCSSFIKTEPSSPASLTDS) has biased composition (polar residues). The segment covering 34–47 (SPGGSSDASGSYSS) has biased composition (low complexity). Positions 102 to 177 (KRLCLVCGDI…VGMLKEGVRL (76 aa)) form a DNA-binding region, nuclear receptor. NR C4-type zinc fingers lie at residues 105-125 (CLVC…CEAC) and 141-160 (CPAT…CQAC). The NR LBD domain occupies 210–434 (PYNKIVSHLL…KLFSEMLEAK (225 aa)).

The protein belongs to the nuclear hormone receptor family. NR3 subfamily. In terms of assembly, homodimer. Interacts with NRIP1, NCOA1 and NCOR2. Binds TLE1, PNRC1 and PNRC2. Binds GRIP1. Acetylated by PCAF/KAT2 (in vitro).

It is found in the nucleus. Functionally, orphan receptor that acts as a transcription activator in the absence of bound ligand. Binds specifically to an estrogen response element and activates reporter genes controlled by estrogen response elements. Induces the expression of PERM1 in the skeletal muscle. The protein is Estrogen-related receptor gamma (ESRRG) of Pongo abelii (Sumatran orangutan).